An 873-amino-acid chain; its full sequence is Bifunctional uridylyltransferase/uridylyl-removing enzyme (873 aa).

Residues 1–332 (MKYLSPLSLS…HQGEQDDAII (332 aa)) are uridylyltransferase. The interval 333 to 692 (IDDDFQRRGR…ISKNASRGGT (360 aa)) is uridylyl-removing. An HD domain is found at 451–573 (VDEHSIRLLK…VRDEERLDYL (123 aa)). 2 consecutive ACT domains span residues 693-777 (EIFV…RPPR) and 800-873 (LMEF…RLSS).

This sequence belongs to the GlnD family. It depends on Mg(2+) as a cofactor.

It catalyses the reaction [protein-PII]-L-tyrosine + UTP = [protein-PII]-uridylyl-L-tyrosine + diphosphate. The enzyme catalyses [protein-PII]-uridylyl-L-tyrosine + H2O = [protein-PII]-L-tyrosine + UMP + H(+). With respect to regulation, uridylyltransferase (UTase) activity is inhibited by glutamine, while glutamine activates uridylyl-removing (UR) activity. In terms of biological role, modifies, by uridylylation and deuridylylation, the PII regulatory proteins (GlnB and homologs), in response to the nitrogen status of the cell that GlnD senses through the glutamine level. Under low glutamine levels, catalyzes the conversion of the PII proteins and UTP to PII-UMP and PPi, while under higher glutamine levels, GlnD hydrolyzes PII-UMP to PII and UMP (deuridylylation). Thus, controls uridylylation state and activity of the PII proteins, and plays an important role in the regulation of nitrogen assimilation and metabolism. This chain is Bifunctional uridylyltransferase/uridylyl-removing enzyme, found in Aliivibrio fischeri (strain ATCC 700601 / ES114) (Vibrio fischeri).